The chain runs to 247 residues: Phycobilisome rod-core linker polypeptide CpcG2 (247 aa).

Residues 11 to 189 (SSQNQRVPGY…YWRDKLENER (179 aa)) enclose the PBS-linker domain.

This sequence belongs to the phycobilisome linker protein family. As to quaternary structure, the phycobilisome is a hemidiscoidal structure that is composed of two distinct substructures: a core complex and a number of rods radiating from the core.

Its subcellular location is the cellular thylakoid membrane. Its function is as follows. Rod-core linker protein required for attachment of phycocyanin to allophycocyanin in cores of phycobilisomes. In terms of biological role, linker polypeptides determine the state of aggregation and the location of the disk-shaped phycobiliprotein units within the phycobilisome and modulate their spectroscopic properties in order to mediate a directed and optimal energy transfer. The sequence is that of Phycobilisome rod-core linker polypeptide CpcG2 (cpcG2) from Mastigocladus laminosus (Fischerella sp.).